The chain runs to 118 residues: NADH-ubiquinone oxidoreductase chain 3 (118 aa).

The next 2 membrane-spanning stretches (helical) occupy residues 7 to 27 and 87 to 107; these read ICIY…LPFL and IDPF…IGSL.

The protein belongs to the complex I subunit 3 family.

It is found in the mitochondrion membrane. The enzyme catalyses a ubiquinone + NADH + 5 H(+)(in) = a ubiquinol + NAD(+) + 4 H(+)(out). Core subunit of the mitochondrial membrane respiratory chain NADH dehydrogenase (Complex I) that is believed to belong to the minimal assembly required for catalysis. Complex I functions in the transfer of electrons from NADH to the respiratory chain. The immediate electron acceptor for the enzyme is believed to be ubiquinone. This chain is NADH-ubiquinone oxidoreductase chain 3 (ND3), found in Solanum tuberosum (Potato).